We begin with the raw amino-acid sequence, 116 residues long: Protein TCL1B1 (116 aa).

The protein belongs to the TCL1 family.

In Mus musculus (Mouse), this protein is Protein TCL1B1 (Tcl1b1).